The sequence spans 321 residues: MSEGVAQLKHEGSRQQVVVAGAAAGLVSRFVIAPLDVIKIRLQLQIHSLSEPTSYRGLNGPVYKGTLGTLKQILRDEGVTGLWKGNIPAELLYLTYGSVQFSAYTNISQMLDTIPAPYTLPSSANSFISGAGAGAAATTVTYPLDLLRTRFAAQGKDRVYTSIVASLKSIAQHEGPTGFFRGLGAGVSQIVPYMGLFFASYESLKPVMADSPLPLPLGSSDAVAGVVASVVSKTAVYPLDTTRKRLQVQGPNRARYVHRNIPTYSGVLMTLQHIWKHEGRRGMYRGLTVSLLKAAPASAVTMWTYERAMGIMVAFEKDGME.

3 Solcar repeats span residues 12 to 110, 121 to 207, and 216 to 311; these read GSRQ…ISQM, PSSA…LKPV, and PLGS…AMGI. The next 6 helical transmembrane spans lie at 17 to 38, 91 to 107, 127 to 147, 182 to 199, 213 to 231, and 286 to 303; these read VVVA…LDVI, LLYL…YTNI, FISG…LDLL, GLGA…LFFA, LPLP…ASVV, and GLTV…VTMW.

This sequence belongs to the mitochondrial carrier (TC 2.A.29) family.

The protein resides in the mitochondrion inner membrane. Mitochondrial transporter that mediates uptake of thiamine pyrophosphate (ThPP) into mitochondria. This Phaeosphaeria nodorum (strain SN15 / ATCC MYA-4574 / FGSC 10173) (Glume blotch fungus) protein is Mitochondrial thiamine pyrophosphate carrier 1 (TPC1).